Consider the following 1499-residue polypeptide: DNA-directed RNA polymerase subunit beta' (1499 aa).

Residues Cys-67, Cys-69, Cys-82, and Cys-85 each contribute to the Zn(2+) site. Residues Asp-497, Asp-499, and Asp-501 each contribute to the Mg(2+) site. Zn(2+) contacts are provided by Cys-865, Cys-940, Cys-947, and Cys-950. The disordered stretch occupies residues 1475–1499 (YEPSQRAYQEDEYAKKEDGEIAIDD). The span at 1482 to 1493 (YQEDEYAKKEDG) shows a compositional bias: basic and acidic residues.

This sequence belongs to the RNA polymerase beta' chain family. In terms of assembly, the RNAP catalytic core consists of 2 alpha, 1 beta, 1 beta' and 1 omega subunit. When a sigma factor is associated with the core the holoenzyme is formed, which can initiate transcription. The cofactor is Mg(2+). Zn(2+) is required as a cofactor.

It carries out the reaction RNA(n) + a ribonucleoside 5'-triphosphate = RNA(n+1) + diphosphate. In terms of biological role, DNA-dependent RNA polymerase catalyzes the transcription of DNA into RNA using the four ribonucleoside triphosphates as substrates. This chain is DNA-directed RNA polymerase subunit beta', found in Chloroherpeton thalassium (strain ATCC 35110 / GB-78).